The chain runs to 314 residues: Aromatic prenyltransferase (314 aa).

It belongs to the aromatic prenyltransferase family.

In terms of biological role, prenyltransferase that attaches isoprenoid moieties to carbon atoms of aromatic substrates in an enzyme-catalyzed Friedel-Crafts reaction. The chain is Aromatic prenyltransferase from Arthroderma otae (strain ATCC MYA-4605 / CBS 113480) (Microsporum canis).